The chain runs to 327 residues: uncharacterized protein (327 aa).

The 74-residue stretch at 32-105 (VRLDKWLAEQ…IPLDILYEDE (74 aa)) folds into the S4 RNA-binding domain. The active site involves Asp156.

It belongs to the pseudouridine synthase RluA family.

The enzyme catalyses a uridine in RNA = a pseudouridine in RNA. This is an uncharacterized protein from Synechocystis sp. (strain ATCC 27184 / PCC 6803 / Kazusa).